The primary structure comprises 391 residues: 3-ketoacyl-CoA thiolase (391 aa).

The active-site Acyl-thioester intermediate is cysteine 95. Catalysis depends on proton acceptor residues histidine 347 and cysteine 377.

The protein belongs to the thiolase-like superfamily. Thiolase family. As to quaternary structure, heterotetramer of two alpha chains (FadB) and two beta chains (FadA).

It is found in the cytoplasm. The enzyme catalyses an acyl-CoA + acetyl-CoA = a 3-oxoacyl-CoA + CoA. The protein operates within lipid metabolism; fatty acid beta-oxidation. Functionally, catalyzes the final step of fatty acid oxidation in which acetyl-CoA is released and the CoA ester of a fatty acid two carbons shorter is formed. The chain is 3-ketoacyl-CoA thiolase from Vibrio parahaemolyticus serotype O3:K6 (strain RIMD 2210633).